Reading from the N-terminus, the 168-residue chain is Small ribosomal subunit protein uS5 (168 aa).

The 64-residue stretch at leucine 13–valine 76 folds into the S5 DRBM domain.

This sequence belongs to the universal ribosomal protein uS5 family. As to quaternary structure, part of the 30S ribosomal subunit. Contacts proteins S4 and S8.

Functionally, with S4 and S12 plays an important role in translational accuracy. In terms of biological role, located at the back of the 30S subunit body where it stabilizes the conformation of the head with respect to the body. This Leuconostoc mesenteroides subsp. mesenteroides (strain ATCC 8293 / DSM 20343 / BCRC 11652 / CCM 1803 / JCM 6124 / NCDO 523 / NBRC 100496 / NCIMB 8023 / NCTC 12954 / NRRL B-1118 / 37Y) protein is Small ribosomal subunit protein uS5.